The sequence spans 108 residues: Cytochrome c-555 (108 aa).

Positions 1–22 (MSRFVSAALVGAALLVSGNAFA) are cleaved as a signal peptide. 4 residues coordinate heme c: cysteine 36, cysteine 39, histidine 40, and methionine 82.

Post-translationally, binds 1 heme c group covalently per subunit.

In terms of biological role, this basic c-type monoheme cytochrome has been found exclusively in the green photosynthetic bacteria, although its role in bacterial photosynthesis is not established. It has an unusually low redox potential compared with mitochondrial cytochrome c. It is reactive with cytochrome c oxidases but not with reductases. This chain is Cytochrome c-555, found in Chlorobaculum tepidum (strain ATCC 49652 / DSM 12025 / NBRC 103806 / TLS) (Chlorobium tepidum).